The primary structure comprises 599 residues: Elongation factor 4 (599 aa).

Residues 5 to 187 form the tr-type G domain; the sequence is AHIRNFSIVA…AIVKHLPAPK (183 aa). GTP-binding positions include 17–22 and 134–137; these read DHGKST and NKID.

This sequence belongs to the TRAFAC class translation factor GTPase superfamily. Classic translation factor GTPase family. LepA subfamily.

It is found in the cell inner membrane. It carries out the reaction GTP + H2O = GDP + phosphate + H(+). Functionally, required for accurate and efficient protein synthesis under certain stress conditions. May act as a fidelity factor of the translation reaction, by catalyzing a one-codon backward translocation of tRNAs on improperly translocated ribosomes. Back-translocation proceeds from a post-translocation (POST) complex to a pre-translocation (PRE) complex, thus giving elongation factor G a second chance to translocate the tRNAs correctly. Binds to ribosomes in a GTP-dependent manner. The sequence is that of Elongation factor 4 from Ruegeria pomeroyi (strain ATCC 700808 / DSM 15171 / DSS-3) (Silicibacter pomeroyi).